A 565-amino-acid chain; its full sequence is Phosphoenolpyruvate-protein phosphotransferase (565 aa).

The Tele-phosphohistidine intermediate role is filled by H191. The phosphoenolpyruvate site is built by R289 and R325. E427 and D451 together coordinate Mg(2+). Residues 450–451 (ND) and R461 contribute to the phosphoenolpyruvate site. The active-site Proton donor is C498.

Belongs to the PEP-utilizing enzyme family. In terms of assembly, homodimer. Mg(2+) serves as cofactor.

Its subcellular location is the cytoplasm. It catalyses the reaction L-histidyl-[protein] + phosphoenolpyruvate = N(pros)-phospho-L-histidyl-[protein] + pyruvate. General (non sugar-specific) component of the phosphoenolpyruvate-dependent sugar phosphotransferase system (sugar PTS). This major carbohydrate active-transport system catalyzes the phosphorylation of incoming sugar substrates concomitantly with their translocation across the cell membrane. Enzyme I transfers the phosphoryl group from phosphoenolpyruvate (PEP) to the phosphoryl carrier protein (HPr). The sequence is that of Phosphoenolpyruvate-protein phosphotransferase (ptsI) from Haloferax volcanii (strain ATCC 29605 / DSM 3757 / JCM 8879 / NBRC 14742 / NCIMB 2012 / VKM B-1768 / DS2) (Halobacterium volcanii).